The chain runs to 149 residues: Putative pre-16S rRNA nuclease (149 aa).

It belongs to the YqgF nuclease family.

The protein resides in the cytoplasm. Could be a nuclease involved in processing of the 5'-end of pre-16S rRNA. This chain is Putative pre-16S rRNA nuclease, found in Cupriavidus metallidurans (strain ATCC 43123 / DSM 2839 / NBRC 102507 / CH34) (Ralstonia metallidurans).